The primary structure comprises 307 residues: Elongation factor Ts (307 aa).

An involved in Mg(2+) ion dislocation from EF-Tu region spans residues 80–83 (TDFV).

It belongs to the EF-Ts family.

It localises to the cytoplasm. Its function is as follows. Associates with the EF-Tu.GDP complex and induces the exchange of GDP to GTP. It remains bound to the aminoacyl-tRNA.EF-Tu.GTP complex up to the GTP hydrolysis stage on the ribosome. The sequence is that of Elongation factor Ts from Rhodospirillum centenum (strain ATCC 51521 / SW).